Reading from the N-terminus, the 341-residue chain is Ribosomal RNA small subunit methyltransferase H (341 aa).

S-adenosyl-L-methionine contacts are provided by residues 47–49, Asp64, Phe91, Asp109, and Gln116; that span reads GGY.

It belongs to the methyltransferase superfamily. RsmH family.

It localises to the cytoplasm. It catalyses the reaction cytidine(1402) in 16S rRNA + S-adenosyl-L-methionine = N(4)-methylcytidine(1402) in 16S rRNA + S-adenosyl-L-homocysteine + H(+). Its function is as follows. Specifically methylates the N4 position of cytidine in position 1402 (C1402) of 16S rRNA. The protein is Ribosomal RNA small subunit methyltransferase H of Rhizobium rhizogenes (strain K84 / ATCC BAA-868) (Agrobacterium radiobacter).